Here is a 918-residue protein sequence, read N- to C-terminus: Plasma membrane ATPase 1 (918 aa).

A compositionally biased stretch (low complexity) spans 1 to 18 (MTDTSSSSSSSSASSVSA). The tract at residues 1–84 (MTDTSSSSSS…VPEEYLQTDP (84 aa)) is disordered. Residues 1 to 115 (MTDTSSSSSS…ADEKESLVVK (115 aa)) are Cytoplasmic-facing. Acidic residues predominate over residues 33 to 47 (AASESSDDDDIDALI). Ser-61 bears the Phosphoserine mark. The helical transmembrane segment at 116 to 136 (FVMFFVGPIQFVMEAAAILAA) threads the bilayer. Residues 137–140 (GLSD) lie on the Extracellular side of the membrane. A helical membrane pass occupies residues 141–160 (WVDFGVICGLLMLNAGVGFV). Over 161–291 (QEFQAGSIVD…GQGHFTEVLN (131 aa)) the chain is Cytoplasmic. The residue at position 175 (Thr-175) is a Phosphothreonine. A Glycyl lysine isopeptide (Lys-Gly) (interchain with G-Cter in ubiquitin) cross-link involves residue Lys-252. The chain crosses the membrane as a helical span at residues 292–313 (GIGIILLVLVIATLLLVWTACF). The Extracellular segment spans residues 314–325 (YRTNGIVRILRY). The helical transmembrane segment at 326–347 (TLGITIIGVPVGLPAVVTTTMA) threads the bilayer. Residues 348–719 (VGAAYLAKKQ…IAILDNSLDI (372 aa)) are Cytoplasmic-facing. Asp-378 functions as the 4-aspartylphosphate intermediate in the catalytic mechanism. Lys-555 is covalently cross-linked (Glycyl lysine isopeptide (Lys-Gly) (interchain with G-Cter in ubiquitin)). The Mg(2+) site is built by Asp-634 and Asp-638. A helical membrane pass occupies residues 720-738 (DLIVFIAIFADVATLAIAY). The Extracellular segment spans residues 739–754 (DNAPYSPKPVKWNLPR). A helical membrane pass occupies residues 755 to 774 (LWGMSIILGIVLAIGSWITL). Residues 775-824 (TTMFLPKGGIIQNFGAMNGIMFLQISLTENWLIFITRAAGPFWSSIPSWQ) are Cytoplasmic-facing. The chain crosses the membrane as a helical span at residues 825-845 (LAGAVFAVDIIATMFTLFGWW). Residues 846 to 857 (SENWTDIVTVVR) are Extracellular-facing. Residues 858 to 874 (VWIWSIGIFCVLGGFYY) form a helical membrane-spanning segment. Topologically, residues 875-918 (EMSTSEAFDRLMNGKPMKEKKSTRSVEDFMAAMQRVSTQHEKET) are cytoplasmic. The residue at position 911 (Ser-911) is a Phosphoserine. Phosphothreonine occurs at positions 912 and 918.

It belongs to the cation transport ATPase (P-type) (TC 3.A.3) family. Type IIIA subfamily. As to quaternary structure, interacts with its cargot receptor EXP1 for its transport within the cell and maturation. Phosphorylated on multiple Ser and Thr residues.

It localises to the cell membrane. The enzyme catalyses ATP + H2O + H(+)(in) = ADP + phosphate + 2 H(+)(out). The plasma membrane ATPase of plants and fungi is a hydrogen ion pump. The proton gradient it generates drives the active transport of nutrients by H(+)-symport. The resulting external acidification and/or internal alkinization may mediate growth responses. In Saccharomyces cerevisiae (strain ATCC 204508 / S288c) (Baker's yeast), this protein is Plasma membrane ATPase 1 (PMA1).